A 508-amino-acid chain; its full sequence is Light-independent protochlorophyllide reductase subunit B (508 aa).

[4Fe-4S] cluster is bound at residue aspartate 36. Aspartate 294 functions as the Proton donor in the catalytic mechanism. Substrate is bound at residue 429–430 (GM).

The protein belongs to the ChlB/BchB/BchZ family. In terms of assembly, protochlorophyllide reductase is composed of three subunits; ChlL, ChlN and ChlB. Forms a heterotetramer of two ChlB and two ChlN subunits. Requires [4Fe-4S] cluster as cofactor.

It catalyses the reaction chlorophyllide a + oxidized 2[4Fe-4S]-[ferredoxin] + 2 ADP + 2 phosphate = protochlorophyllide a + reduced 2[4Fe-4S]-[ferredoxin] + 2 ATP + 2 H2O. Its pathway is porphyrin-containing compound metabolism; chlorophyll biosynthesis (light-independent). Component of the dark-operative protochlorophyllide reductase (DPOR) that uses Mg-ATP and reduced ferredoxin to reduce ring D of protochlorophyllide (Pchlide) to form chlorophyllide a (Chlide). This reaction is light-independent. The NB-protein (ChlN-ChlB) is the catalytic component of the complex. This Gloeothece citriformis (strain PCC 7424) (Cyanothece sp. (strain PCC 7424)) protein is Light-independent protochlorophyllide reductase subunit B.